Here is a 104-residue protein sequence, read N- to C-terminus: ATP synthase subunit c (104 aa).

A run of 2 helical transmembrane segments spans residues 31–51 (SMIAAGLGLGLAALGGAIGMG) and 75–95 (MFIALAMIEAQVIYALVIALI).

The protein belongs to the ATPase C chain family. In terms of assembly, F-type ATPases have 2 components, F(1) - the catalytic core - and F(0) - the membrane proton channel. F(1) has five subunits: alpha(3), beta(3), gamma(1), delta(1), epsilon(1). F(0) has three main subunits: a(1), b(2) and c(10-14). The alpha and beta chains form an alternating ring which encloses part of the gamma chain. F(1) is attached to F(0) by a central stalk formed by the gamma and epsilon chains, while a peripheral stalk is formed by the delta and b chains.

The protein resides in the cell inner membrane. F(1)F(0) ATP synthase produces ATP from ADP in the presence of a proton or sodium gradient. F-type ATPases consist of two structural domains, F(1) containing the extramembraneous catalytic core and F(0) containing the membrane proton channel, linked together by a central stalk and a peripheral stalk. During catalysis, ATP synthesis in the catalytic domain of F(1) is coupled via a rotary mechanism of the central stalk subunits to proton translocation. Its function is as follows. Key component of the F(0) channel; it plays a direct role in translocation across the membrane. A homomeric c-ring of between 10-14 subunits forms the central stalk rotor element with the F(1) delta and epsilon subunits. The sequence is that of ATP synthase subunit c from Sulfurimonas denitrificans (strain ATCC 33889 / DSM 1251) (Thiomicrospira denitrificans (strain ATCC 33889 / DSM 1251)).